We begin with the raw amino-acid sequence, 644 residues long: Pentatricopeptide repeat-containing protein At1g12775, mitochondrial (644 aa).

A mitochondrion-targeting transit peptide spans 1–53; sequence MVRMMIRRLSSQASRFVQPRLLETGTLRIALINCPNELLFCCERGFSTFSDRN. 15 PPR repeats span residues 87-121, 122-156, 157-191, 192-226, 227-261, 262-296, 297-331, 332-366, 367-401, 402-436, 437-471, 472-506, 507-541, 542-576, and 577-611; these read TVID…GIAH, SIYT…GYEP, DTVI…GHKP, TLIT…GFQP, NEVT…NIKL, DAVK…GFKA, DIIT…KISP, NVVT…GIAP, NTIT…GCDP, DIMT…GVIA, NTVT…RVRP, DIVS…KMEL, DIGI…GVKL, DARA…GHAP, and DELT…GFPA.

The protein belongs to the PPR family. P subfamily.

It localises to the mitochondrion. In Arabidopsis thaliana (Mouse-ear cress), this protein is Pentatricopeptide repeat-containing protein At1g12775, mitochondrial.